Here is a 574-residue protein sequence, read N- to C-terminus: Putative thiamine pyrophosphate-containing protein YdaP (574 aa).

Residues 28 to 55 (DSINEFIEELRHERNQLKFIQTRHEEVA) are a coiled coil. Glu-52 contributes to the thiamine diphosphate binding site. FAD-binding positions include 256–277 (IGTK…LGTS) and 294–313 (DSDP…LVCD). Residues 384–464 (TVTVWMARHF…ITVVILNNEN (81 aa)) form a thiamine pyrophosphate binding region. Residues Asp-435 and Asn-462 each coordinate Mg(2+).

The protein belongs to the TPP enzyme family. Mg(2+) is required as a cofactor. Requires thiamine diphosphate as cofactor.

This Bacillus subtilis (strain 168) protein is Putative thiamine pyrophosphate-containing protein YdaP (ydaP).